The chain runs to 393 residues: Phosphopentomutase (393 aa).

D13, D286, H291, D327, H328, and H339 together coordinate Mn(2+).

Belongs to the phosphopentomutase family. Requires Mn(2+) as cofactor.

The protein resides in the cytoplasm. It carries out the reaction 2-deoxy-alpha-D-ribose 1-phosphate = 2-deoxy-D-ribose 5-phosphate. The enzyme catalyses alpha-D-ribose 1-phosphate = D-ribose 5-phosphate. The protein operates within carbohydrate degradation; 2-deoxy-D-ribose 1-phosphate degradation; D-glyceraldehyde 3-phosphate and acetaldehyde from 2-deoxy-alpha-D-ribose 1-phosphate: step 1/2. Isomerase that catalyzes the conversion of deoxy-ribose 1-phosphate (dRib-1-P) and ribose 1-phosphate (Rib-1-P) to deoxy-ribose 5-phosphate (dRib-5-P) and ribose 5-phosphate (Rib-5-P), respectively. This chain is Phosphopentomutase, found in Symbiobacterium thermophilum (strain DSM 24528 / JCM 14929 / IAM 14863 / T).